The following is a 314-amino-acid chain: Mitochondrial 2-oxoglutarate/malate carrier protein (314 aa).

Residue Ala2 is modified to N-acetylalanine. Ser6 is modified (phosphoserine). 3 Solcar repeats span residues 23 to 108, 117 to 208, and 217 to 306; these read VKFL…LFER, PGFL…SKQF, and DNIL…MNKA. A helical membrane pass occupies residues 24–42; that stretch reads KFLFGGLAGMGATVFVQPL. An N6-succinyllysine modification is found at Lys57. Lys73 is subject to N6-acetyllysine. A helical transmembrane segment spans residues 83–101; it reads GLSAGLLRQATYTTTRLGI. Tyr102 bears the Phosphotyrosine mark. Transmembrane regions (helical) follow at residues 119–140, 183–202, and 222–240; these read FLLKAVIGMTAGATGAFVGTPA, GCIPTMARAVVVNAAQLASY, and HFCASMISGLVTTAASMPV. Lys256 carries the post-translational modification N6-acetyllysine. A helical transmembrane segment spans residues 281–300; it reads GFTPYYARLGPHTVLTFIFL.

It belongs to the mitochondrial carrier (TC 2.A.29) family. As to quaternary structure, interacts with SMIM26. In terms of tissue distribution, most highly expressed in the heart.

The protein resides in the mitochondrion inner membrane. It catalyses the reaction (S)-malate(in) + 2-oxoglutarate(out) = (S)-malate(out) + 2-oxoglutarate(in). It carries out the reaction malonate(in) + 2-oxoglutarate(out) = malonate(out) + 2-oxoglutarate(in). The catalysed reaction is succinate(in) + 2-oxoglutarate(out) = succinate(out) + 2-oxoglutarate(in). The enzyme catalyses maleate(in) + 2-oxoglutarate(out) = maleate(out) + 2-oxoglutarate(in). It catalyses the reaction oxaloacetate(in) + 2-oxoglutarate(out) = oxaloacetate(out) + 2-oxoglutarate(in). In terms of biological role, catalyzes the transport of 2-oxoglutarate (alpha-oxoglutarate) across the inner mitochondrial membrane in an electroneutral exchange for malate. Can also exchange 2-oxoglutarate for other dicarboxylic acids such as malonate, succinate, maleate and oxaloacetate, although with lower affinity. Contributes to several metabolic processes, including the malate-aspartate shuttle, the oxoglutarate/isocitrate shuttle, in gluconeogenesis from lactate, and in nitrogen metabolism. Maintains mitochondrial fusion and fission events, and the organization and morphology of cristae. Involved in the regulation of apoptosis. Helps protect from cytotoxic-induced apoptosis by modulating glutathione levels in mitochondria. The sequence is that of Mitochondrial 2-oxoglutarate/malate carrier protein (SLC25A11) from Homo sapiens (Human).